We begin with the raw amino-acid sequence, 127 residues long: UPF0325 protein ASA_3165 (127 aa).

Belongs to the UPF0325 family.

This chain is UPF0325 protein ASA_3165, found in Aeromonas salmonicida (strain A449).